Reading from the N-terminus, the 435-residue chain is Tubulin-like protein TubZ (435 aa).

GTP contacts are provided by residues 25 to 26, 124 to 126, Asn185, and Asn209; these read MG and GTG. The disordered stretch occupies residues 403 to 435; it reads QEEKPKKKKLNFGAEPEAEVADDSQPTKKKLSF.

The protein belongs to the FtsZ family. TubZ subfamily. As to quaternary structure, polymerizes to form two-stranded filaments and bundles at higher concentration in the presence of GTP. Binds to the TubR-tubC protein DNA complex.

It is found in the cytoplasm. It catalyses the reaction GTP + H2O = GDP + phosphate + H(+). GTPase inhibited by GTP-gamma-S, which also stabilizes filaments. In terms of biological role, a tubulin-like, filament forming GTPase; the motor component of the type III plasmid partition system which ensures correct segregation of the pXO1 plasmid. Essential for plasmid replication. The filaments seed from a DNA centromere-like site (tubC)-TubR complex which extends to surround the TubZ filaments. Highly dynamic filaments grow at the plus end and depolymerize at the minus end, a process called treadmilling. TubR-tubC complexes track the depolymerizing minus end of the filament, probably pulling plasmid within the cell. Has a high GTPase activity; in the presence of GTP assembles into dynamic filaments which bind almost exclusively GDP. Filament formation is cooperative, requiring a critical concentration. Formation occurs very quickly and is followed by disassembly as GTP is consumed. Small amounts of GTP-gamma-S stabilize filaments. Has high GTP and dGTPase activity, 6-fold lower ATPase activity. Forms filaments in the presence of ATP that also disassemble. Weakly binds DNA in a GTP-dependent, non-sequence-specific manner; GTP hydrolysis is not required for DNA-binding. The chain is Tubulin-like protein TubZ from Bacillus anthracis.